Here is a 472-residue protein sequence, read N- to C-terminus: Argininosuccinate lyase (472 aa).

This sequence belongs to the lyase 1 family. Argininosuccinate lyase subfamily.

It is found in the cytoplasm. It catalyses the reaction 2-(N(omega)-L-arginino)succinate = fumarate + L-arginine. Its pathway is amino-acid biosynthesis; L-arginine biosynthesis; L-arginine from L-ornithine and carbamoyl phosphate: step 3/3. This Syntrophus aciditrophicus (strain SB) protein is Argininosuccinate lyase.